We begin with the raw amino-acid sequence, 233 residues long: MAHVCLPLDEPDARGVFKRRLNRFVGVAEIGGADELVHIHDPGRLAELLYPGSVIWARRKKTGKTRYYLTAVELADELVFVDSAKHNKIASWLIESGVLLPGYRVERHEPAYGKGRFDLLLRGPKGEKALVEVKGVTLEVGGRALFPDAPTTRGARHMEELARAAADGFEAHVVFLVLRKKAAVFSPNWEMDRRFAEALARAYKSGVYVHAVKLETSRWCLKYVEKLPIDLQL.

This sequence belongs to the SfsA family.

In Pyrobaculum neutrophilum (strain DSM 2338 / JCM 9278 / NBRC 100436 / V24Sta) (Thermoproteus neutrophilus), this protein is Sugar fermentation stimulation protein homolog.